Consider the following 247-residue polypeptide: DNA polymerase sliding clamp (247 aa).

The protein belongs to the PCNA family. In terms of assembly, homotrimer. The subunits circularize to form a toroid; DNA passes through its center. Replication factor C (RFC) is required to load the toroid on the DNA.

Functionally, sliding clamp subunit that acts as a moving platform for DNA processing. Responsible for tethering the catalytic subunit of DNA polymerase and other proteins to DNA during high-speed replication. This is DNA polymerase sliding clamp from Haloarcula marismortui (strain ATCC 43049 / DSM 3752 / JCM 8966 / VKM B-1809) (Halobacterium marismortui).